The primary structure comprises 564 residues: Dihydroxy-acid dehydratase (564 aa).

Residue cysteine 55 coordinates [2Fe-2S] cluster. Aspartate 87 provides a ligand contact to Mg(2+). Residue cysteine 128 coordinates [2Fe-2S] cluster. Residues aspartate 129 and lysine 130 each contribute to the Mg(2+) site. N6-carboxylysine is present on lysine 130. Cysteine 200 lines the [2Fe-2S] cluster pocket. Glutamate 452 is a Mg(2+) binding site. Serine 478 acts as the Proton acceptor in catalysis.

Belongs to the IlvD/Edd family. Homodimer. [2Fe-2S] cluster serves as cofactor. The cofactor is Mg(2+).

The catalysed reaction is (2R)-2,3-dihydroxy-3-methylbutanoate = 3-methyl-2-oxobutanoate + H2O. It catalyses the reaction (2R,3R)-2,3-dihydroxy-3-methylpentanoate = (S)-3-methyl-2-oxopentanoate + H2O. It functions in the pathway amino-acid biosynthesis; L-isoleucine biosynthesis; L-isoleucine from 2-oxobutanoate: step 3/4. It participates in amino-acid biosynthesis; L-valine biosynthesis; L-valine from pyruvate: step 3/4. Functions in the biosynthesis of branched-chain amino acids. Catalyzes the dehydration of (2R,3R)-2,3-dihydroxy-3-methylpentanoate (2,3-dihydroxy-3-methylvalerate) into 2-oxo-3-methylpentanoate (2-oxo-3-methylvalerate) and of (2R)-2,3-dihydroxy-3-methylbutanoate (2,3-dihydroxyisovalerate) into 2-oxo-3-methylbutanoate (2-oxoisovalerate), the penultimate precursor to L-isoleucine and L-valine, respectively. The protein is Dihydroxy-acid dehydratase of Albidiferax ferrireducens (strain ATCC BAA-621 / DSM 15236 / T118) (Rhodoferax ferrireducens).